The sequence spans 419 residues: Tyrosine--tRNA ligase (419 aa).

Residue Y34 coordinates L-tyrosine. The 'HIGH' region motif lies at 39–48; it reads PTADSLHLGN. L-tyrosine is bound by residues Y169 and Q173. The 'KMSKS' region motif lies at 229-233; that stretch reads KFGKS. K232 lines the ATP pocket. Positions 353 to 419 constitute an S4 RNA-binding domain; it reads LTLIELLISA…GKKKNFVLTY (67 aa).

The protein belongs to the class-I aminoacyl-tRNA synthetase family. TyrS type 1 subfamily. In terms of assembly, homodimer.

It is found in the cytoplasm. It catalyses the reaction tRNA(Tyr) + L-tyrosine + ATP = L-tyrosyl-tRNA(Tyr) + AMP + diphosphate + H(+). Its function is as follows. Catalyzes the attachment of tyrosine to tRNA(Tyr) in a two-step reaction: tyrosine is first activated by ATP to form Tyr-AMP and then transferred to the acceptor end of tRNA(Tyr). In Lactococcus lactis subsp. cremoris (strain SK11), this protein is Tyrosine--tRNA ligase.